The chain runs to 351 residues: Nicotinate-nucleotide--dimethylbenzimidazole phosphoribosyltransferase (351 aa).

The active-site Proton acceptor is the glutamate 313.

The protein belongs to the CobT family.

The catalysed reaction is 5,6-dimethylbenzimidazole + nicotinate beta-D-ribonucleotide = alpha-ribazole 5'-phosphate + nicotinate + H(+). Its pathway is nucleoside biosynthesis; alpha-ribazole biosynthesis; alpha-ribazole from 5,6-dimethylbenzimidazole: step 1/2. Functionally, catalyzes the synthesis of alpha-ribazole-5'-phosphate from nicotinate mononucleotide (NAMN) and 5,6-dimethylbenzimidazole (DMB). The polypeptide is Nicotinate-nucleotide--dimethylbenzimidazole phosphoribosyltransferase (Mycobacterium leprae (strain Br4923)).